We begin with the raw amino-acid sequence, 249 residues long: UPF0758 protein Oant_1909 (249 aa).

The 123-residue stretch at 127–249 folds into the MPN domain; it reads VLGSWNKVIE…HASFRGLGLI (123 aa). Residues His198, His200, and Asp211 each contribute to the Zn(2+) site. Residues 198 to 211 carry the JAMM motif motif; the sequence is HNHPSGDPTPSRAD.

The protein belongs to the UPF0758 family.

The polypeptide is UPF0758 protein Oant_1909 (Brucella anthropi (strain ATCC 49188 / DSM 6882 / CCUG 24695 / JCM 21032 / LMG 3331 / NBRC 15819 / NCTC 12168 / Alc 37) (Ochrobactrum anthropi)).